Here is a 328-residue protein sequence, read N- to C-terminus: Integrator complex subunit 12 (328 aa).

Residues 1 to 45 (MAANIAAAAAAAQEVDPVLKKAIKLLHSSNPTSAAELRLLLDEAL) are sufficient for binding to IntS1 and IntS9 and for 3'-end snRNA processing. The segment at 128–185 (DLNCCVCGEMVFTATNRLIECSKCGAMYHQECHKPPITKEEAADDQEQNWQCDTCCNK) adopts a PHD-type zinc-finger fold. Low complexity-rich tracts occupy residues 215–233 (KAKS…NSSS), 241–264 (SSST…SSSS), 274–283 (KSTAASSLSA), and 292–311 (SSGT…SKSS). Residues 215-328 (KAKSSVASSR…GSSSKRRSKQ (114 aa)) form a disordered region.

Belongs to the Integrator subunit 12 family. As to quaternary structure, belongs to the multiprotein complex Integrator, at least composed of IntS1, IntS2, IntS3, IntS4, omd/IntS5, IntS6, defl/IntS7, IntS8, IntS9, IntS10, IntS11, IntS12, asun/IntS13, IntS14 and IntS15. The core complex associates with protein phosphatase 2A subunits mts/PP2A and Pp2A-29B, to form the Integrator-PP2A (INTAC) complex. Within the complex, interacts with IntS1 and IntS9. Interaction with IntS1 is likely to be important for promoting 3'-end processing of snRNAs.

The protein localises to the nucleus. Functionally, component of the integrator complex, a multiprotein complex that terminates RNA polymerase II (Pol II) transcription in the promoter-proximal region of genes. The integrator complex provides a quality checkpoint during transcription elongation by driving premature transcription termination of transcripts that are unfavorably configured for transcriptional elongation: the complex terminates transcription by (1) catalyzing dephosphorylation of the C-terminal domain (CTD) of Pol II subunit Polr2A/Rbp1 and Spt5, and (2) degrading the exiting nascent RNA transcript via endonuclease activity. The integrator complex is also involved in the 3'-end processing of the U7 snRNA, and also the spliceosomal snRNAs U1, U2, U4 and U5. Required for the normal expression of the Integrator complex component IntS1. This is Integrator complex subunit 12 from Drosophila melanogaster (Fruit fly).